Consider the following 309-residue polypeptide: Ribosomal RNA small subunit methyltransferase H (309 aa).

S-adenosyl-L-methionine contacts are provided by residues glycine 34–histidine 36, aspartate 54, phenylalanine 80, aspartate 102, and glutamine 109.

It belongs to the methyltransferase superfamily. RsmH family.

It is found in the cytoplasm. It carries out the reaction cytidine(1402) in 16S rRNA + S-adenosyl-L-methionine = N(4)-methylcytidine(1402) in 16S rRNA + S-adenosyl-L-homocysteine + H(+). Specifically methylates the N4 position of cytidine in position 1402 (C1402) of 16S rRNA. The protein is Ribosomal RNA small subunit methyltransferase H of Cellvibrio japonicus (strain Ueda107) (Pseudomonas fluorescens subsp. cellulosa).